The primary structure comprises 475 residues: MVRLWCGKLRLWKPYLALATQSRNSWFCSGGGAPSHHLHILKKYGSSEITEMINRYKRNVAGHTLTQNSMVGQYKTTVSPSVAQNVTIETFDSLCIQGNWREAVEVLDYLENKGYAMDLIRLLGLAKLCGKPEALEAARVVHECIIALVSPCDVGARNAIIEMYSGCCSVDDALKVFEEMPEWNSGTLCVMMRCFVNNGYGEEAIDLFTRFKEEGNKPNGEIFNQVFSTCTLTGDVKEGSLQFQAMYREYGIVPSMEHYHSVTKMLATSGHLDEALNFVERMPMEPSVDVWETLMNLSRVHGDVELGDRCAELVEKLDATRLDKVSSAGLVATKASDFVKKEPSTRSEPYFYSTFRPVDSSHPQMNIIYETLMSLRSQLKEMGYVPDTRYYRSLIMAMENKEQIFGYREEIAVVESLLKSKPRSAITLLTNIRIVGDCHDMMKLMSVITGRDMIKRDAKIYHLFKNGVCRCNNLW.

A mitochondrion-targeting transit peptide spans 1–37 (MVRLWCGKLRLWKPYLALATQSRNSWFCSGGGAPSHH). PPR repeat units follow at residues 83–117 (AQNV…GYAM), 118–148 (DLIR…IIAL), 153–183 (DVGA…MPEW), 184–218 (NSGT…GNKP), 219–254 (NGEI…GIVP), and 255–285 (SMEH…MPME). Residues 350-380 (YFYSTFRPVDSSHPQMNIIYETLMSLRSQLK) are type E(+) motif. Residues 381–475 (EMGYVPDTRY…NGVCRCNNLW (95 aa)) form a type DYW motif region.

It belongs to the PPR family. PCMP-H subfamily.

It is found in the mitochondrion. This is Pentatricopeptide repeat-containing protein At1g29710, mitochondrial (PCMP-H67) from Arabidopsis thaliana (Mouse-ear cress).